The sequence spans 538 residues: Protein BFR2 (538 aa).

A disordered region spans residues 1 to 239; sequence MVKAKGRAKE…AKPMMAALST (239 aa). The span at 7 to 23 shows a compositional bias: basic and acidic residues; the sequence is RAKEFQDPDEPITKDYD. Composition is skewed to acidic residues over residues 80–105 and 172–222; these read LEEESASEEDDEEGSGDEEFDDPETA and DSED…DEED. Residues 290-363 are a coiled coil; it reads YEAAEEAAIK…KWSRKVQSVN (74 aa).

This sequence belongs to the AATF family.

The protein resides in the nucleus. The protein localises to the nucleolus. This chain is Protein BFR2 (BFR2), found in Gibberella zeae (strain ATCC MYA-4620 / CBS 123657 / FGSC 9075 / NRRL 31084 / PH-1) (Wheat head blight fungus).